The following is a 584-amino-acid chain: UBX domain-containing protein 2 (584 aa).

Residues 1–80 lie on the Cytoplasmic side of the membrane; it reads MPVVNHEDSE…PTQTSTPMAE (80 aa). A helical membrane pass occupies residues 81 to 101; the sequence is TLVPPALGPRPLLFTASLPVV. Over 102 to 151 the chain is Lumenal; the sequence is RPLPANFRNDFRTIGLNGRSNTVWSMFESFSYDGNPFLFILLLIPRIINR. Residues 152–172 form a helical membrane-spanning segment; the sequence is LSATIFTFFCTLLSLHSISGG. Over 173–584 the chain is Cytoplasmic; that stretch reads GNSGKPKISK…DEEDEENEEQ (412 aa). The UBX domain occupies 426–570; that stretch reads ETTGKQATLQ…WPNGSLLVEA (145 aa).

As to quaternary structure, component of the DOA10 ubiquitin ligase complex which contains E3 ligase SSM4/DOA10 and CDC48-binding protein UBX2/SEL1. Component of the HRD1 ubiquitin ligase complex which contains the E3 ligase HRD1, its cofactors HRD3, USA1 and DER1, substrate recruiting factor YOS9 and UBX2. In ERAD-L, HRD3 and YOS9 jointly bind misfolded glycoproteins in the endoplasmic reticulum (ER) lumen. Movement of ERAD-L substrates through the ER membrane is facilitated by HRD1 and DER1 which have lateral gates facing each other and which distort the membrane region between the lateral gates, making it much thinner than a normal phospholipid bilayer. Substrates insert into the membrane as a hairpin loop with one strand interacting with DER1 and the other with HRD1. Both the DOA10 and HRD1 ubiquitin ligase complexes interact with the heterotrimeric CDC48-NPL4-UFD1 ATPase complex which is recruited by UBX2 via its interaction with CDC48 and which moves ubiquitinated substrates to the cytosol for targeting to the proteasome.

It is found in the endoplasmic reticulum membrane. Integral endoplasmic reticulum membrane protein that coordinates the assembly of the ER-associated protein degradation (ERAD) machinery at the ER membrane. Mediates binding of CDC48 to the E3 ubiquitin ligases SSM4/DOA10 and HRD1, and to ERAD substrates. Component of the DOA10 ubiquitin ligase complex, which is part of the ERAD-C pathway responsible for the rapid degradation of membrane proteins with misfolded cytoplasmic domains. ERAD-C substrates are ubiquitinated through DOA10 in conjunction with the E2 ubiquitin-conjugating enzymes UBC6 and UBC7-CUE1. Also a component of the HRD1 ubiquitin ligase complex, which is part of the ERAD-L and ERAD-M pathways responsible for the rapid degradation of soluble lumenal and membrane proteins with misfolded lumenal domains (ERAD-L), or ER-membrane proteins with misfolded transmembrane domains (ERAD-M). ERAD-L substrates are ubiquitinated through HRD1 in conjunction with the E2 ubiquitin-conjugating enzymes UBC1 and UBC7-CUE1. Ubiquitinated substrates are then removed to the cytosol via the action of the CDC48-NPL4-UFD1 ATPase complex and targeted to the proteasome. The protein is UBX domain-containing protein 2 (UBX2) of Saccharomyces cerevisiae (strain ATCC 204508 / S288c) (Baker's yeast).